A 267-amino-acid polypeptide reads, in one-letter code: Pyrroline-5-carboxylate reductase (267 aa).

Belongs to the pyrroline-5-carboxylate reductase family.

It is found in the cytoplasm. It carries out the reaction L-proline + NADP(+) = (S)-1-pyrroline-5-carboxylate + NADPH + 2 H(+). The catalysed reaction is L-proline + NAD(+) = (S)-1-pyrroline-5-carboxylate + NADH + 2 H(+). It participates in amino-acid biosynthesis; L-proline biosynthesis; L-proline from L-glutamate 5-semialdehyde: step 1/1. Functionally, catalyzes the reduction of 1-pyrroline-5-carboxylate (PCA) to L-proline. The protein is Pyrroline-5-carboxylate reductase of Synechocystis sp. (strain ATCC 27184 / PCC 6803 / Kazusa).